The following is a 210-amino-acid chain: MNHTKSSFIKLALECQVLKFGEFTLKSGRISPYFFNAGLFYHGDSLRKLGQFYAKTLLEQEVSFEHLFGPAYKGIPLATATAVALAELGRDITVTFNRKEVKTHGEGGQLIGSPLTGRTVIIDDVITAGTAFRESQTLIKENGGILRGVIIALDRCERGLTEKSTLSEIREQGIEVYSIINLFDLIEFLKNDNQYEQVQKLESYQERYGA.

Lys-26 provides a ligand contact to 5-phospho-alpha-D-ribose 1-diphosphate. 34–35 is an orotate binding site; the sequence is FF. Residues 72–73, Arg-98, Lys-99, Lys-102, His-104, and 123–131 contribute to the 5-phospho-alpha-D-ribose 1-diphosphate site; these read YK and DDVITAGTA. Residues Thr-127 and Arg-155 each contribute to the orotate site.

Belongs to the purine/pyrimidine phosphoribosyltransferase family. PyrE subfamily. In terms of assembly, homodimer. Requires Mg(2+) as cofactor.

The enzyme catalyses orotidine 5'-phosphate + diphosphate = orotate + 5-phospho-alpha-D-ribose 1-diphosphate. Its pathway is pyrimidine metabolism; UMP biosynthesis via de novo pathway; UMP from orotate: step 1/2. Functionally, catalyzes the transfer of a ribosyl phosphate group from 5-phosphoribose 1-diphosphate to orotate, leading to the formation of orotidine monophosphate (OMP). The sequence is that of Orotate phosphoribosyltransferase from Legionella pneumophila (strain Paris).